The chain runs to 236 residues: Ribonuclease PH (236 aa).

Residues Arg86 and 124–126 contribute to the phosphate site; that span reads GTR.

Belongs to the RNase PH family. As to quaternary structure, homohexameric ring arranged as a trimer of dimers.

The catalysed reaction is tRNA(n+1) + phosphate = tRNA(n) + a ribonucleoside 5'-diphosphate. Its function is as follows. Phosphorolytic 3'-5' exoribonuclease that plays an important role in tRNA 3'-end maturation. Removes nucleotide residues following the 3'-CCA terminus of tRNAs; can also add nucleotides to the ends of RNA molecules by using nucleoside diphosphates as substrates, but this may not be physiologically important. Probably plays a role in initiation of 16S rRNA degradation (leading to ribosome degradation) during starvation. The polypeptide is Ribonuclease PH (Thermodesulfovibrio yellowstonii (strain ATCC 51303 / DSM 11347 / YP87)).